A 621-amino-acid polypeptide reads, in one-letter code: MIEDNINNNENENEDKNGNGNENENDKNNKNNKFEALLMQSPISQSTPFIFPSPKINSNILTTEPLTTQLSSSPTTTPSLKKRKPKTVRNPFIGPSSNKTKSNFPEFPSWTFEKNNNDFCQGGLSIKNKHLFTFDDNNNNNNNNNNNNNNNNNNNNNNNNNLNINFNNRSIYNNYKNNNNFNQSDDEDCEKDNDRFLNSENFDEEEDEEDEDDCTNKNFEWSIDMLATIMPVNITLDNQQNNLNSTNNSDNGYESSTELFEFKKWKIEDEKKSNDYFSRPTIYPHVKINNQNNQNNQNNSFLFKSSKTNQSIQQLQQQQQQQQQQQQQQNNNDNNNNNNNNNNNNNNSTLTSSNSLSGIKRKSSGSNYNSEDDTYSIEKDQTGVSAFVDDILIGDINLSSISSIGGGNSGIVFGRPTIFNTPTHFNTYIYNNNNNNNNNNNNNNNNNNNNNNNNNNNNNSGSNSKPIIAKRFPNRPQFPECLEESFSINLNKQSQNNNNNNNNNNNNNNNNNNNNNNNNNNNNNNNNNNNNNNNNIKIINNNNNDSDIFLTPMTPVKITSVTKSTRKSKYNFHVTDPLILPDISPIKIKHPITPTQINSNSSNNIVSPSSSPSKKFEYCKF.

Low complexity-rich tracts occupy residues 1 to 10 (MIEDNINNNE), 63 to 79 (TEPLTTQLSSSPTTTPS), 137 to 182 (NNNN…NNFN), and 309 to 347 (NQSIQQLQQQQQQQQQQQQQQNNNDNNNNNNNNNNNNNN). Disordered stretches follow at residues 1–29 (MIEDNINNNENENEDKNGNGNENENDKNN), 63–100 (TEPLTTQLSSSPTTTPSLKKRKPKTVRNPFIGPSSNKT), 135–194 (DDNN…KDND), 307–374 (KTNQ…EDDT), 430–471 (YNNN…IAKR), 492–539 (KQSQ…IKII), and 594–614 (PTQINSNSSNNIVSPSSSPSK). Positions 348–357 (STLTSSNSLS) are enriched in polar residues. 3 stretches are compositionally biased toward low complexity: residues 431–459 (NNNNNNNNNNNNNNNNNNNNNNNNNNNNN), 496–539 (NNNN…IKII), and 597–613 (INSNSSNNIVSPSSSPS).

This is an uncharacterized protein from Dictyostelium discoideum (Social amoeba).